The sequence spans 328 residues: MNSPQNVSTKKVTVTGAAGQISYSLLWRIANGEVFGTDTPVELKLLEIPQALGGAEGVAMELLDSAFPLLRNITITADANEAFDGANAAFLVGAKPRGKGEERADLLANNGKIFGPQGKAINDNAADDIRVLVVGNPANTNALIASAAAPDVPASRFNAMMRLDHNRAISQLATKLGRGSAEFNNIVVWGNHSATQFPDITYATVGGEKVTDLVDHDWYVEEFIPRVANRGAEIIEVRGKSSAASAASSAIDHMRDWVQGTEAWSSAAIPSTGAYGIPEGIFVGLPTVSRNGEWEIVEGLEISDFQRARIDANAQELQAEREAVRDLL.

16–22 contributes to the NAD(+) binding site; sequence GAAGQIS. Residues R97 and R103 each coordinate substrate. NAD(+)-binding positions include N110, Q117, and 134–136; that span reads VGN. Positions 136 and 167 each coordinate substrate. H192 functions as the Proton acceptor in the catalytic mechanism.

It belongs to the LDH/MDH superfamily. MDH type 2 family. As to quaternary structure, homotetramer.

The enzyme catalyses (S)-malate + NAD(+) = oxaloacetate + NADH + H(+). Its activity is regulated as follows. Citrate activates the enzyme in the oxidation of malate to oxaloacetate and inhibits it in the reverse reaction. Functionally, catalyzes the reversible oxidation of malate to oxaloacetate. Exhibits higher catalytic efficiency for oxaloacetate reduction than for malate oxidation in vitro. Almost equally active both for NADH and NADPH on the bases of the kcat values at pH 6.5, but catalytic efficiency for oxaloacetate reduction is 50-fold higher with NADH. The sequence is that of Malate dehydrogenase from Corynebacterium glutamicum (strain ATCC 13032 / DSM 20300 / JCM 1318 / BCRC 11384 / CCUG 27702 / LMG 3730 / NBRC 12168 / NCIMB 10025 / NRRL B-2784 / 534).